Reading from the N-terminus, the 207-residue chain is Protein FAM177A1 (207 aa).

Met1 is subject to N-acetylmethionine. Position 65 is a phosphoserine (Ser65). Thr66 carries the phosphothreonine modification. The stretch at 131 to 170 forms a coiled coil; sequence IDEYYRMKKEEEEEEEENRMSEEAERQYQQNKLQADSIVQ. The interval 142-176 is disordered; sequence EEEEEENRMSEEAERQYQQNKLQADSIVQTDQPET. The span at 157–176 shows a compositional bias: polar residues; the sequence is QYQQNKLQADSIVQTDQPET.

The protein belongs to the FAM177 family.

The chain is Protein FAM177A1 (Fam177a1) from Mus musculus (Mouse).